The chain runs to 428 residues: Cytochrome c biogenesis protein CcsB (428 aa).

A run of 3 helical transmembrane segments spans residues 14–34 (LRFAISLIIFIAITSGIGTFI), 72–92 (SIWFLFTLILLCISLSACSFR), and 162–182 (IGPLVVHIGLIVLLLGSAYGS).

Belongs to the Ccs1/CcsB family. In terms of assembly, may interact with CcsA.

The protein localises to the cellular thylakoid membrane. Required during biogenesis of c-type cytochromes (cytochrome c6 and cytochrome f) at the step of heme attachment. This Prochlorococcus marinus (strain MIT 9312) protein is Cytochrome c biogenesis protein CcsB.